Consider the following 335-residue polypeptide: Phosphate acyltransferase (335 aa).

This sequence belongs to the PlsX family. As to quaternary structure, homodimer. Probably interacts with PlsY.

It is found in the cytoplasm. It catalyses the reaction a fatty acyl-[ACP] + phosphate = an acyl phosphate + holo-[ACP]. The protein operates within lipid metabolism; phospholipid metabolism. Catalyzes the reversible formation of acyl-phosphate (acyl-PO(4)) from acyl-[acyl-carrier-protein] (acyl-ACP). This enzyme utilizes acyl-ACP as fatty acyl donor, but not acyl-CoA. The chain is Phosphate acyltransferase from Streptococcus suis (strain 98HAH33).